Here is a 261-residue protein sequence, read N- to C-terminus: Phosphonates import ATP-binding protein PhnC (261 aa).

Residues 8–253 enclose the ABC transporter domain; the sequence is LRVENLSKTY…WFRRIYGEGA (246 aa). 41–48 contacts ATP; that stretch reads GLSGSGKS.

It belongs to the ABC transporter superfamily. Phosphonates importer (TC 3.A.1.9.1) family. In terms of assembly, the complex is composed of two ATP-binding proteins (PhnC), two transmembrane proteins (PhnE) and a solute-binding protein (PhnD).

Its subcellular location is the cell inner membrane. It carries out the reaction phosphonate(out) + ATP + H2O = phosphonate(in) + ADP + phosphate + H(+). Part of the ABC transporter complex PhnCDE involved in phosphonates import. Responsible for energy coupling to the transport system. The polypeptide is Phosphonates import ATP-binding protein PhnC (Bdellovibrio bacteriovorus (strain ATCC 15356 / DSM 50701 / NCIMB 9529 / HD100)).